The following is a 49-amino-acid chain: uncharacterized protein (49 aa).

The interval 1–49 (MSNETFEQNEPKPTKVEELQPGDVEAVEDSTPVREITQTDHINKAMLQI) is disordered. Over residues 9-18 (NEPKPTKVEE) the composition is skewed to basic and acidic residues.

This is an uncharacterized protein from Dictyostelium discoideum (Social amoeba).